The primary structure comprises 98 residues: U1-theraphotoxin-Ap1a (98 aa).

A signal peptide spans 1–23; the sequence is MRSLTLAAVLACSLLLVFHTSAA. The propeptide occupies 24–50; that stretch reads EELEVQDGHLMNPGDGDTALATVDDER. 3 disulfide bridges follow: C54/C84, C58/C90, and C72/C95. Residues 63 to 84 are disordered; it reads DGKSKEGKPCKPKGDKNKDKKC.

The protein belongs to the neurotoxin 12 (Hwtx-2) family. 01 (Ap1a) subfamily. Expressed by the venom gland.

It localises to the secreted. Is toxic to both insects and mammals. Induces reversible paralysis when injected into S.frugiperda larvae. Reduces both the amplitude and frequency of responses from muscle (GF-TTM and GF-DLM) pathways in the D.melanogaster giant fiber circuit, suggesting an action at the neuromuscular junction, which is mediated by glutamatergic receptors. In mice, intracranial injection of 30 ug causes increased urination, myoclonus, hypermotility with circular movements followed by respiratory and generalized seizures resulting in death within 25-35 minutes of injection. This is U1-theraphotoxin-Ap1a from Acanthoscurria paulensis (Brazilian giant black tarantula spider).